A 412-amino-acid polypeptide reads, in one-letter code: Zinc finger protein 821 (412 aa).

Residues 26 to 83 (RQAMMKTDFPGDLGSQRQAIQQLRDQDSSSSDSEGDEEETTQDEVSSHTSEEDGGVVK) form a disordered region. Positions 58 to 67 (SEGDEEETTQ) are enriched in acidic residues. 2 consecutive C2H2-type zinc fingers follow at residues 116 to 140 (ELCQCPLCQLDCGSREQLIAHVYQH) and 150 to 172 (YMCPVCGRALSSPGSLGRHLLIH). Positions 257 to 366 (KWALRRQNEP…EKMDMMLRAQ (110 aa)) form a coiled coil. Residues 278-319 (RTAKKSRRDNETPEEREVRRMRDREAKRLQRMQETDEQRARR) form a disordered region.

Belongs to the krueppel C2H2-type zinc-finger protein family.

The protein localises to the nucleus. Functionally, may be involved in transcriptional regulation. This Homo sapiens (Human) protein is Zinc finger protein 821 (ZNF821).